We begin with the raw amino-acid sequence, 389 residues long: MPTPCPPACLSTPGTHRLLPFPDWKAPSWESRKEATCNSSSPGPWAEPTVQGYHPTRRLRAWGGLAGGATFMVIWFFWLWGSAPGSAPVPQSTLTILIWHWPFTNRPPELPGDTCTRYGMASCRLSANRSLLASADAVVFHHRELQTRQSLLPLDQRPHGQPWVWASMESPSNTHGLHRFRGIFNWVLSYRRDSDIFVPYGRLEPLSGPTSPLPAKSRMAAWVISNFQERQQRAKLYRQLAPHLQVDVFGRASGRPLCANCLLPTLARYRFYLAFENSQHRDYITEKFWRNALAAGAVPVALGPPRATYEAFVPPDAFVHVDDFSSARELAVFLVSMNESRYRGFFAWRDRLRVRLLGDWRERFCTICARYPYLPRSQVYEDLESWFQA.

The Cytoplasmic segment spans residues 1-55; it reads MPTPCPPACLSTPGTHRLLPFPDWKAPSWESRKEATCNSSSPGPWAEPTVQGYHP. The chain crosses the membrane as a helical; Signal-anchor for type II membrane protein span at residues 56 to 78; it reads TRRLRAWGGLAGGATFMVIWFFW. Residues 79-389 are Lumenal-facing; sequence LWGSAPGSAP…YEDLESWFQA (311 aa). A disulfide bond links C115 and C123. The N-linked (GlcNAc...) asparagine glycan is linked to N128. C258 and C261 form a disulfide bridge. An N-linked (GlcNAc...) asparagine glycan is attached at N338. Residues C365 and C368 are joined by a disulfide bond.

Belongs to the glycosyltransferase 10 family. Post-translationally, N-glycosylated. Highly expressed in lung and bone marrow and to a much lesser extent in spleen, salivary gland and skeletal muscle.

It localises to the golgi apparatus. It is found in the golgi stack membrane. It catalyses the reaction an N-acetyl-alpha-neuraminyl-(2-&gt;3)-beta-D-galactosyl-(1-&gt;4)-N-acetyl-beta-D-glucosaminyl derivative + GDP-beta-L-fucose = an alpha-Neu5Ac-(2-&gt;3)-beta-D-Gal-(1-&gt;4)-[alpha-L-Fuc-(1-&gt;3)]-beta-D-GlcNAc derivative + GDP + H(+). The catalysed reaction is an alpha-Neu5Ac-(2-&gt;3)-beta-D-Gal-(1-&gt;4)-beta-D-GlcNAc6S derivative + GDP-beta-L-fucose = an alpha-Neu5Ac-(2-&gt;3)-beta-D-Gal-(1-&gt;4)-[alpha-L-Fuc-(1-&gt;3)]-beta-D-GlcNAc6S derivative + GDP + H(+). The enzyme catalyses a neolactoside IV(3)-alpha-NeuAc-nLc4Cer + GDP-beta-L-fucose = a neolactoside IV(3)-alpha-NeuNAc,III(3)-alpha-Fuc-nLc4Cer + GDP + H(+). It carries out the reaction a neolactoside VI(3)-alpha-NeuNAc-nLc6Cer + GDP-beta-L-fucose = a neolactoside VI(3)-alpha-NeuAc,V(3)-alphaFuc-nLc6Cer + GDP + H(+). It catalyses the reaction an alpha-Neu5Ac-(2-&gt;3)-beta-D-Gal-(1-&gt;4)-beta-D-GlcNAc-(1-&gt;3)-beta-D-Gal-(1-&gt;4)-[alpha-L-Fuc-(1-&gt;3)]-beta-D-GlcNAc derivative + GDP-beta-L-fucose = an alpha-Neu5Ac-(2-&gt;3)-beta-D-Gal-(1-&gt;4)-[alpha-L-Fuc-(1-&gt;3)]-beta-D-GlcNAc-(1-&gt;3)-beta-D-Gal-(1-&gt;4)-[alpha-L-Fuc-(1-&gt;3)]-beta-D-GlcNAc derivative + GDP + H(+). The catalysed reaction is alpha-Neu5Ac-(2-&gt;3)-beta-D-Gal-(1-&gt;4)-beta-D-GlcNAc-(1-&gt;3)-beta-D-Gal-(1-&gt;4)-D-Glc + GDP-beta-L-fucose = alpha-Neu5Ac-(2-&gt;3)-beta-D-Gal-(1-&gt;4)-[alpha-L-Fuc-(1-&gt;3)]-beta-D-GlcNAc-(1-&gt;3)-beta-D-Gal-(1-&gt;4)-D-Glc + GDP + H(+). The enzyme catalyses alpha-Neu5Ac-(2-&gt;3)-beta-D-Gal-(1-&gt;4)-beta-D-GlcNAc-(1-&gt;3)-beta-D-Gal-(1-&gt;4)-[alpha-L-Fuc-(1-&gt;3)]-beta-D-GlcNAc-(1-&gt;3)-beta-D-Gal-(1-&gt;4)-beta-D-GlcNAc + GDP-beta-L-fucose = alpha-Neu5Ac-(2-&gt;3)-beta-D-Gal-(1-&gt;4)-[alpha-L-Fuc-(1-&gt;3)]-beta-D-GlcNAc-(1-&gt;3)-beta-D-Gal-(1-&gt;4)-[alpha-L-Fuc-(1-&gt;3)]-beta-D-GlcNAc-(1-&gt;3)-beta-D-Gal-(1-&gt;4)-beta-D-GlcNAc + GDP + H(+). It carries out the reaction alpha-Neu5Ac-(2-&gt;3)-beta-D-Gal-(1-&gt;4)-beta-D-GlcNAc-(1-&gt;3)-beta-D-Gal-(1-&gt;4)-beta-D-GlcNAc-(1-&gt;3)-beta-D-Gal-(1-&gt;4)-beta-D-GlcNAc + GDP-beta-L-fucose = alpha-Neu5Ac-(2-&gt;3)-beta-D-Gal-(1-&gt;4)-[alpha-L-Fuc-(1-&gt;3)]-beta-D-GlcNAc-(1-&gt;3)-beta-D-Gal-(1-&gt;4)-beta-D-GlcNAc-(1-&gt;3)-beta-D-Gal-(1-&gt;4)-beta-D-GlcNAc + GDP + H(+). It participates in protein modification; protein glycosylation. With respect to regulation, inhibited by NaCl. Inhibited by GDP in a concentration dependent manner, with an IC(50) value of 93 uM. Also inhibited by GMP and GTP. Inhibited by N-ethylmaleimide. Activated by poly(ethylene glycol) by enhancing the thermal stability of FUT7. Activated by Mn2+, Ca2+, and Mg2+. Both panosialin A and B inhibit activity with IC(50) values of 4.8 and 5.3 ug/ml, respectively. Inhibited by gallic acid (GA) and (-)-epigallocatechin gallate (EGCG) in a time-dependent and irreversible manner with IC(50) values of 60 and 700 nM, respectively. Catalyzes the transfer of L-fucose, from a guanosine diphosphate-beta-L-fucose, to the N-acetyl glucosamine (GlcNAc) of a distal alpha2,3 sialylated lactosamine unit of a glycoprotein or a glycolipid-linked sialopolylactosamines chain through an alpha-1,3 glycosidic linkage and participates in the final fucosylation step in the biosynthesis of the sialyl Lewis X (sLe(x)), a carbohydrate involved in cell and matrix adhesion during leukocyte trafficking and fertilization. In vitro, also synthesizes sialyl-dimeric-Lex structures, from VIM-2 structures and both di-fucosylated and trifucosylated structures from mono-fucosylated precursors. However does not catalyze alpha 1-3 fucosylation when an internal alpha 1-3 fucosylation is present in polylactosamine chain and the fucosylation rate of the internal GlcNAc residues is reduced once fucose has been added to the distal GlcNAc. Also catalyzes the transfer of a fucose from GDP-beta-fucose to the 6-sulfated a(2,3)sialylated substrate to produce 6-sulfo sLex mediating significant L-selectin-dependent cell adhesion. Through sialyl-Lewis(x) biosynthesis, can control SELE- and SELP-mediated cell adhesion with leukocytes and allows leukocytes tethering and rolling along the endothelial tissue thereby enabling the leukocytes to accumulate at a site of inflammation. May enhance embryo implantation through sialyl Lewis X (sLeX)-mediated adhesion of embryo cells to endometrium. May affect insulin signaling by up-regulating the phosphorylation and expression of some signaling molecules involved in the insulin-signaling pathway through SLe(x) which is present on the glycans of the INSRR alpha subunit. The sequence is that of Alpha-(1,3)-fucosyltransferase 7 from Mus musculus (Mouse).